Reading from the N-terminus, the 246-residue chain is Cell division protein ZapD (246 aa).

Belongs to the ZapD family. In terms of assembly, interacts with FtsZ.

The protein resides in the cytoplasm. Its function is as follows. Cell division factor that enhances FtsZ-ring assembly. Directly interacts with FtsZ and promotes bundling of FtsZ protofilaments, with a reduction in FtsZ GTPase activity. In Vibrio parahaemolyticus serotype O3:K6 (strain RIMD 2210633), this protein is Cell division protein ZapD.